The chain runs to 183 residues: Ribulose bisphosphate carboxylase small subunit, chloroplastic (183 aa).

A chloroplast-targeting transit peptide spans 1–58 (MASSMLSTAAVACINRASPAQASMVAPFTGLKSTSAFPTTRKTTTDITSIASNGGRVQ).

The protein belongs to the RuBisCO small chain family. As to quaternary structure, heterohexadecamer of 8 large and 8 small subunits.

It is found in the plastid. The protein localises to the chloroplast. Its function is as follows. RuBisCO catalyzes two reactions: the carboxylation of D-ribulose 1,5-bisphosphate, the primary event in carbon dioxide fixation, as well as the oxidative fragmentation of the pentose substrate. Both reactions occur simultaneously and in competition at the same active site. Although the small subunit is not catalytic it is essential for maximal activity. The chain is Ribulose bisphosphate carboxylase small subunit, chloroplastic from Hevea brasiliensis (Para rubber tree).